Reading from the N-terminus, the 283-residue chain is Pyridoxine/pyridoxal/pyridoxamine kinase (283 aa).

Residues serine 23 and histidine 59 each contribute to the substrate site. Residue aspartate 125 participates in ATP binding. Tyrosine 136 contributes to the Mg(2+) binding site. ATP contacts are provided by residues threonine 157, glutamate 162, threonine 195, 222-225 (HAHV), and threonine 232. Glutamate 162 lines the Mg(2+) pocket. Residue aspartate 234 participates in substrate binding.

Belongs to the pyridoxine kinase family. PdxK subfamily. In terms of assembly, homodimer. Requires Mg(2+) as cofactor.

It catalyses the reaction pyridoxal + ATP = pyridoxal 5'-phosphate + ADP + H(+). The catalysed reaction is pyridoxine + ATP = pyridoxine 5'-phosphate + ADP + H(+). The enzyme catalyses pyridoxamine + ATP = pyridoxamine 5'-phosphate + ADP + H(+). The protein operates within cofactor metabolism; pyridoxal 5'-phosphate salvage; pyridoxal 5'-phosphate from pyridoxal: step 1/1. It participates in cofactor metabolism; pyridoxal 5'-phosphate salvage; pyridoxine 5'-phosphate from pyridoxine: step 1/1. It functions in the pathway cofactor metabolism; pyridoxal 5'-phosphate salvage; pyridoxamine 5'-phosphate from pyridoxamine: step 1/1. B6-vitamer kinase involved in the salvage pathway of pyridoxal 5'-phosphate (PLP). Catalyzes the phosphorylation of pyridoxine (PN), pyridoxal (PL), and pyridoxamine (PM), forming their respective 5'-phosphorylated esters, i.e. PNP, PLP and PMP. The protein is Pyridoxine/pyridoxal/pyridoxamine kinase of Bordetella bronchiseptica (strain ATCC BAA-588 / NCTC 13252 / RB50) (Alcaligenes bronchisepticus).